The chain runs to 175 residues: Adenine phosphoribosyltransferase (175 aa).

Belongs to the purine/pyrimidine phosphoribosyltransferase family. Homodimer.

The protein resides in the cytoplasm. The enzyme catalyses AMP + diphosphate = 5-phospho-alpha-D-ribose 1-diphosphate + adenine. It functions in the pathway purine metabolism; AMP biosynthesis via salvage pathway; AMP from adenine: step 1/1. Catalyzes a salvage reaction resulting in the formation of AMP, that is energically less costly than de novo synthesis. The protein is Adenine phosphoribosyltransferase of Francisella tularensis subsp. tularensis (strain WY96-3418).